The primary structure comprises 118 residues: Beta-2-microglobulin (118 aa).

The N-terminal stretch at 1–20 is a signal peptide; it reads MARFVVLVLLGLLYLSHLDA. An Ig-like C1-type domain is found at 25-113; it reads PKVQVYSRHP…TTLSEPKVVK (89 aa). Cysteine 45 and cysteine 99 form a disulfide bridge.

Belongs to the beta-2-microglobulin family. Heterodimer of an alpha chain and a beta chain. Beta-2-microglobulin is the beta-chain of major histocompatibility complex class I molecules.

The protein localises to the secreted. Component of the class I major histocompatibility complex (MHC). Involved in the presentation of peptide antigens to the immune system. The sequence is that of Beta-2-microglobulin (B2M) from Felis catus (Cat).